The chain runs to 482 residues: F-box/LRR-repeat protein At3g58930 (482 aa).

The F-box domain occupies 1 to 47; sequence MDRVSNLPDGVRGHILSFLPAKHIALTSVLSKSWLNLWKLIPILDID. LRR repeat units follow at residues 122–150, 175–200, 222–248, 313–344, and 345–370; these read SYED…KIRN, SDLI…RMAS, GTGC…NYSD, ILYL…GIKS, and EEGR…IIEG.

This Arabidopsis thaliana (Mouse-ear cress) protein is F-box/LRR-repeat protein At3g58930.